The sequence spans 163 residues: R-phycoerythrin alpha chain (163 aa).

Residues Cys-82 and Cys-139 each coordinate (2R,3E)-phycoerythrobilin.

Belongs to the phycobiliprotein family. In terms of assembly, heterodimer of an alpha and a beta chain. In terms of processing, contains two covalently linked bilin chromophores.

The protein resides in the plastid. The protein localises to the chloroplast thylakoid membrane. Light-harvesting photosynthetic bile pigment-protein from the phycobiliprotein complex. This chain is R-phycoerythrin alpha chain (cpeA), found in Aglaothamnion neglectum (Red alga).